We begin with the raw amino-acid sequence, 403 residues long: S-adenosylmethionine synthase (403 aa).

H15 contacts ATP. Residue D17 coordinates Mg(2+). E43 provides a ligand contact to K(+). Residues E56 and Q99 each coordinate L-methionine. A flexible loop region spans residues 99-109 (QSPDINQGVDR). ATP is bound by residues 166 to 168 (DAK), 232 to 233 (KF), D241, 247 to 248 (RK), A264, and K268. D241 serves as a coordination point for L-methionine. K272 is an L-methionine binding site.

Belongs to the AdoMet synthase family. As to quaternary structure, homotetramer; dimer of dimers. It depends on Mg(2+) as a cofactor. Requires K(+) as cofactor.

It is found in the cytoplasm. It carries out the reaction L-methionine + ATP + H2O = S-adenosyl-L-methionine + phosphate + diphosphate. It functions in the pathway amino-acid biosynthesis; S-adenosyl-L-methionine biosynthesis; S-adenosyl-L-methionine from L-methionine: step 1/1. Catalyzes the formation of S-adenosylmethionine (AdoMet) from methionine and ATP. The overall synthetic reaction is composed of two sequential steps, AdoMet formation and the subsequent tripolyphosphate hydrolysis which occurs prior to release of AdoMet from the enzyme. This is S-adenosylmethionine synthase from Xylella fastidiosa (strain Temecula1 / ATCC 700964).